We begin with the raw amino-acid sequence, 481 residues long: Cysteine--tRNA ligase (481 aa).

Cysteine 29 contributes to the Zn(2+) binding site. Positions 31 to 41 (VTVYDYCHIGH) match the 'HIGH' region motif. Residues cysteine 209, histidine 234, and glutamate 238 each coordinate Zn(2+). The 'KMSKS' region motif lies at 266-270 (KMSKS). Lysine 269 is a binding site for ATP.

Belongs to the class-I aminoacyl-tRNA synthetase family. As to quaternary structure, monomer. Zn(2+) is required as a cofactor.

The protein localises to the cytoplasm. It carries out the reaction tRNA(Cys) + L-cysteine + ATP = L-cysteinyl-tRNA(Cys) + AMP + diphosphate. This Syntrophotalea carbinolica (strain DSM 2380 / NBRC 103641 / GraBd1) (Pelobacter carbinolicus) protein is Cysteine--tRNA ligase.